The sequence spans 125 residues: Large ribosomal subunit protein bL12 (125 aa).

Belongs to the bacterial ribosomal protein bL12 family. Homodimer. Part of the ribosomal stalk of the 50S ribosomal subunit. Forms a multimeric L10(L12)X complex, where L10 forms an elongated spine to which 2 to 4 L12 dimers bind in a sequential fashion. Binds GTP-bound translation factors.

Its function is as follows. Forms part of the ribosomal stalk which helps the ribosome interact with GTP-bound translation factors. Is thus essential for accurate translation. The sequence is that of Large ribosomal subunit protein bL12 from Rhizobium leguminosarum bv. trifolii (strain WSM2304).